We begin with the raw amino-acid sequence, 220 residues long: uncharacterized protein (220 aa).

This is an uncharacterized protein from Acidianus two-tailed virus (ATV).